A 279-amino-acid chain; its full sequence is Fatty acid metabolism regulator protein (279 aa).

The 69-residue stretch at 6 to 74 (KSPAGFAEKY…HGKPTKVNQF (69 aa)) folds into the HTH gntR-type domain. Residues 34–53 (ERELSELIGVTRTTLREVLQ) constitute a DNA-binding region (H-T-H motif).

As to quaternary structure, homodimer.

The protein localises to the cytoplasm. Functionally, multifunctional regulator of fatty acid metabolism. The polypeptide is Fatty acid metabolism regulator protein (Vibrio vulnificus (strain CMCP6)).